A 513-amino-acid chain; its full sequence is Sucrose transport protein SUC1 (513 aa).

Residues 1–11 (MGAYETEKPTK) show a composition bias toward basic and acidic residues. The segment at 1–26 (MGAYETEKPTKDAAALETQSPEDFDQ) is disordered. The Cytoplasmic portion of the chain corresponds to 1–32 (MGAYETEKPTKDAAALETQSPEDFDQPSPLRK). Phosphoserine is present on serine 20. The chain crosses the membrane as a helical span at residues 33-53 (IISVASIAAGVQFGWALQLSL). The Extracellular segment spans residues 54–67 (LTPYVQLLGIPHKW). Residues 68 to 88 (SSLIWLCGPVSGMIVQPIVGF) form a helical membrane-spanning segment. Residues 89 to 101 (HSDRCRSKFGRRR) are Cytoplasmic-facing. Residues 102–122 (PFIATGAALVAVAVFLIGYAA) form a helical membrane-spanning segment. At 123 to 139 (DFGYKMGDKLEEKVKVR) the chain is on the extracellular side. The chain crosses the membrane as a helical span at residues 140–160 (AIGIFALGFWILDVANNTLQG). Over 161 to 178 (PCRAFLADLAAGDAKRTR) the chain is Cytoplasmic. A helical transmembrane segment spans residues 179 to 199 (VANAFFSFFMAVGNVLGYAAG). Residues 200–224 (SYTNLHKMFPFTMTKACDIYCANLK) lie on the Extracellular side of the membrane. A helical transmembrane segment spans residues 225–245 (TCFFLSITLLLIVTVTSLWYV). The Cytoplasmic portion of the chain corresponds to 246-282 (NDKQWSPPPRNADDDEKTSSVPLFGEIFGAFKVMKRP). A helical transmembrane segment spans residues 283–303 (MWMLLIVTALNWIAWFPFLLF). Residues 304-334 (DTDWMGREVFGGDSDGNERSKKLYSLGVQSG) lie on the Extracellular side of the membrane. The helical transmembrane segment at 335–355 (AMGLMFNSIVLGFMSLGVEWI) threads the bilayer. Residues 356-365 (GRKLGGAKRL) are Cytoplasmic-facing. Residues 366–386 (WGIVNFILAAGLAMTVLVTKF) traverse the membrane as a helical segment. The Extracellular segment spans residues 387-408 (AEDHRKTAGDLAGPSASVKAGA). The helical transmembrane segment at 409–429 (LSLFAVLGIPLAITFSTPFAL) threads the bilayer. Topologically, residues 430–441 (ASIFSSCSGAGQ) are cytoplasmic. The chain crosses the membrane as a helical span at residues 442–462 (GLSLGVLNLAIVIPQMIVSLG). Residues 463-474 (GGPFDALFGGGN) are Extracellular-facing. A helical membrane pass occupies residues 475-495 (LPAFIVAAIAAAISGVLALTV). Over 496 to 513 (LPSPPPDAPKATTMGGFH) the chain is Cytoplasmic.

Belongs to the glycoside-pentoside-hexuronide (GPH) cation symporter transporter (TC 2.A.2.4) family. In terms of tissue distribution, expressed in flowers (at protein level). Highly expressed in pollen. Expressed in pollen tubes and root vascular cylinder, pericycle and endodermis.

It localises to the membrane. It catalyses the reaction sucrose(out) + H(+)(out) = sucrose(in) + H(+)(in). It participates in glycan biosynthesis; sucrose metabolism. Inhibited by DEPC, protonophores (e.g. dinitrophenol and carbonyl cyanide m-chlorophenyl-hydrazone (CCCP)), and SH group inhibitors (e.g. N-ethylmaleimide (NEM) and p-chloromercuriphenyl sulphonic acid (PCMPS)). Responsible for the transport of sucrose into the cell, with the concomitant uptake of protons (symport system). This transport is both voltage- and energy-dependent. Can also transport other glucosides such as maltose, alpha-phenylglucoside and beta-phenylglucoside. May also transport biotin. Required for normal pollen germination and anthocyanin accumulation induced by sucrose. This is Sucrose transport protein SUC1 from Arabidopsis thaliana (Mouse-ear cress).